Reading from the N-terminus, the 76-residue chain is Sec-independent protein translocase protein TatA (76 aa).

Residues 1–21 (MGGISITQLLIIVAIVVLLFG) traverse the membrane as a helical segment. Positions 45 to 76 (DDNKEKDAEFKSLSDDSETTAKTEKAKDKEQA) are disordered.

This sequence belongs to the TatA/E family. The Tat system comprises two distinct complexes: a TatABC complex, containing multiple copies of TatA, TatB and TatC subunits, and a separate TatA complex, containing only TatA subunits. Substrates initially bind to the TatABC complex, which probably triggers association of the separate TatA complex to form the active translocon.

Its subcellular location is the cell inner membrane. In terms of biological role, part of the twin-arginine translocation (Tat) system that transports large folded proteins containing a characteristic twin-arginine motif in their signal peptide across membranes. TatA could form the protein-conducting channel of the Tat system. The polypeptide is Sec-independent protein translocase protein TatA (Pasteurella multocida (strain Pm70)).